Here is an 854-residue protein sequence, read N- to C-terminus: Nucleolar MIF4G domain-containing protein 1 (854 aa).

The segment at 2-275 is necessary for nucleolar localization and for targeting PPP1CA to the nucleolus; it reads PRNVPEVNGV…EEDPDWQVLQ (274 aa). Ser-60 carries the phosphoserine modification. Disordered regions lie at residues 66 to 215 and 231 to 333; these read ESRS…PLSF and SGGG…GEKY. Basic residues predominate over residues 76–99; the sequence is PGGRKSRKELRKEKRHLRKARRLQ. Residues 104–113 show a composition bias toward gly residues; that stretch reads SGSGDQGGNV. The span at 128–173 shows a compositional bias: low complexity; sequence VRPTPAKATATPAKASAPSTNTKASAAQPKAKAKGAPGKPGPATAT. Over residues 188-197 the composition is skewed to basic and acidic residues; it reads REIRKLERCL. A compositionally biased stretch (acidic residues) spans 265-280; sequence SEEDPDWQVLQEDQED. Basic and acidic residues-rich tracts occupy residues 281–291, 303–315, and 322–331; these read VNSKRRGEAES, RFAE…RSSS, and QESHSVESGE. The Required for efficient binding to PPP1CA and for targeting PPP1CA to the nucleolus motif lies at 301-304; that stretch reads KVRF. Phosphoserine is present on residues Ser-311, Ser-314, and Ser-315. Positions 356–553 constitute an MIF4G domain; the sequence is KKHVKGLINR…ETMLALKNND (198 aa). Positions 648-764 constitute an MI domain; it reads DVRRIIFCTL…PLSVLKVVEF (117 aa).

This sequence belongs to the CWC22 family. As to quaternary structure, may interact with EIF4A1, EIF4A2 and EIF4A3. Interacts with PPP1CA and PPP1CC.

Its subcellular location is the nucleus. The protein resides in the nucleolus. In terms of biological role, plays a role in targeting PPP1CA to the nucleolus. The protein is Nucleolar MIF4G domain-containing protein 1 (Nom1) of Mus musculus (Mouse).